A 481-amino-acid polypeptide reads, in one-letter code: Long chain base biosynthesis protein 1b (481 aa).

The helical transmembrane segment at 32-52 (FGIHIDGHLVVEGLLIAAILF) threads the bilayer.

Belongs to the class-II pyridoxal-phosphate-dependent aminotransferase family. In terms of assembly, heterodimer with LCB2. Component of the serine palmitoyltransferase (SPT) complex, composed of LCB1 and LCB2. It depends on pyridoxal 5'-phosphate as a cofactor.

Its subcellular location is the endoplasmic reticulum membrane. It carries out the reaction L-serine + hexadecanoyl-CoA + H(+) = 3-oxosphinganine + CO2 + CoA. It participates in lipid metabolism; sphingolipid metabolism. Functionally, serine palmitoyltransferase (SPT). The heterodimer formed with LCB2 constitutes the catalytic core. This Oryza sativa subsp. japonica (Rice) protein is Long chain base biosynthesis protein 1b.